A 335-amino-acid chain; its full sequence is D-alanine--D-alanine ligase (335 aa).

An ATP-grasp domain is found at 124-329 (KMWFSALGVP…FTHYLYSNIK (206 aa)). ATP is bound at residue 154-209 (ALENWGSIFIKAASQGSSVGCYRVDSQDELVSSLEQAFSFSPYVIVEKTINARELE). Mg(2+) is bound by residues aspartate 283, glutamate 296, and asparagine 298.

It belongs to the D-alanine--D-alanine ligase family. Mg(2+) serves as cofactor. It depends on Mn(2+) as a cofactor.

The protein resides in the cytoplasm. The enzyme catalyses 2 D-alanine + ATP = D-alanyl-D-alanine + ADP + phosphate + H(+). It functions in the pathway cell wall biogenesis; peptidoglycan biosynthesis. In terms of biological role, cell wall formation. The polypeptide is D-alanine--D-alanine ligase (Shewanella woodyi (strain ATCC 51908 / MS32)).